A 1368-amino-acid polypeptide reads, in one-letter code: Inactive tyrosine-protein kinase PRAG1 (1368 aa).

The tract at residues 200-236 (CLKGPRPCTSPQPLRESLPSEDDSDQRCSPSGDSEGG) is disordered. A Phosphotyrosine; by CSK modification is found at Y238. The segment at 297 to 330 (STANPPHLGPKKPSLNSEAASSSDGLSCGSSRSG) is disordered. Over residues 317–330 (SSSDGLSCGSSRSG) the composition is skewed to low complexity. Phosphotyrosine; by CSK occurs at positions 343 and 391. Disordered stretches follow at residues 392–443 (AESA…PNAA), 499–605 (LSSR…GAWS), and 636–792 (HSNS…KKIV). Positions 414–434 (VSSGQVWTGDTWSQKTPSGWS) are enriched in polar residues. The span at 502–518 (RESHPHNMTENSSKEKP) shows a compositional bias: basic and acidic residues. 2 stretches are compositionally biased toward low complexity: residues 522–535 (PKLS…SPVS) and 550–563 (SGSS…SRVP). Composition is skewed to polar residues over residues 564–574 (TNLTSSCQTNG) and 652–666 (SGQN…SKSA). Phosphoserine is present on residues S667 and S716. Composition is skewed to polar residues over residues 707-717 (VSQSSAESLSP) and 725-741 (SFTT…SRTC). Residues S753 and S797 each carry the phosphoserine modification. Disordered regions lie at residues 799–818 (PDGF…SPKL) and 873–901 (NSKG…VSSQ). The span at 887–901 (AATSTSSSQLSVSSQ) shows a compositional bias: low complexity. The segment at 906–949 (SSQLQLHSLLSSISSKEGTYAKLGGLYTQSLARLVTKCEDLFMG) is required for homodimerization. One can recognise a Protein kinase domain in the interval 940–1291 (VTKCEDLFMG…EAKRVLQCLL (352 aa)). Polar residues predominate over residues 1134–1144 (SSPGPSANPSV). The segment at 1134 to 1166 (SSPGPSANPSVPTTTSRCPSAAPAATTACQGGP) is disordered. The span at 1145–1162 (PTTTSRCPSAAPAATTAC) shows a compositional bias: low complexity. The segment at 1293-1368 (GPRRELVEQP…LQSLKLLQLL (76 aa)) is required for homodimerization.

This sequence belongs to the protein kinase superfamily. Homodimer. Dimerization leads to the catalytic activation of CSK. Interacts (via C-terminus) with RND2. Interacts with CSK (via SH2 domain) in a Tyr-391 phosphorylation-dependent manner; this interaction potentiates kinase activity of CSK. Interacts with NOTCH1 intracellular domain (N1ICD). Forms a complex with N1ICD and MAML1, in a MAML1-dependent manner. Post-translationally, phosphorylated by CSK on Tyr-238, Tyr-343, and Tyr-391; Tyr-391 is a primary site of phosphorylation. Highly-expressed in brain, including cortical and hippocampal pyramidal neurons, as well as in kidney, spleen, colon and small intestine.

Its subcellular location is the cytoplasm. The protein localises to the nucleus. The protein resides in the cell junction. It is found in the focal adhesion. Its function is as follows. Catalytically inactive protein kinase that acts as a scaffold protein. Functions as an effector of the small GTPase RND2, which stimulates RhoA activity and inhibits NGF-induced neurite outgrowth. Promotes Src family kinase (SFK) signallig by regulating the subcellular localization of CSK, a negative regulator of these kinases, leading to the regulation of cell morphology and motility by a CSK-dependent mechanism. Acts as a critical coactivator of Notch signaling. The polypeptide is Inactive tyrosine-protein kinase PRAG1 (Rattus norvegicus (Rat)).